A 520-amino-acid chain; its full sequence is 2-isopropylmalate synthase (520 aa).

The Pyruvate carboxyltransferase domain maps to 12-274; that stretch reads VLIFDTTLRD…TTGIDTTQIM (263 aa). Residues aspartate 21, histidine 209, histidine 211, and asparagine 245 each contribute to the Mn(2+) site. The segment at 398 to 520 is regulatory domain; the sequence is RLLSLTVIAG…RLHAQHAAAE (123 aa).

It belongs to the alpha-IPM synthase/homocitrate synthase family. LeuA type 1 subfamily. In terms of assembly, homodimer. Mn(2+) serves as cofactor.

It localises to the cytoplasm. It catalyses the reaction 3-methyl-2-oxobutanoate + acetyl-CoA + H2O = (2S)-2-isopropylmalate + CoA + H(+). Its pathway is amino-acid biosynthesis; L-leucine biosynthesis; L-leucine from 3-methyl-2-oxobutanoate: step 1/4. Its function is as follows. Catalyzes the condensation of the acetyl group of acetyl-CoA with 3-methyl-2-oxobutanoate (2-ketoisovalerate) to form 3-carboxy-3-hydroxy-4-methylpentanoate (2-isopropylmalate). This is 2-isopropylmalate synthase from Methylobacterium nodulans (strain LMG 21967 / CNCM I-2342 / ORS 2060).